Here is a 692-residue protein sequence, read N- to C-terminus: Elongation factor G (692 aa).

Residues 8-282 (ENTRNIGIMA…AVIDYLPSPL (275 aa)) enclose the tr-type G domain. GTP contacts are provided by residues 17 to 24 (AHIDAGKT), 81 to 85 (DTPGH), and 135 to 138 (NKMD).

Belongs to the TRAFAC class translation factor GTPase superfamily. Classic translation factor GTPase family. EF-G/EF-2 subfamily.

It is found in the cytoplasm. Catalyzes the GTP-dependent ribosomal translocation step during translation elongation. During this step, the ribosome changes from the pre-translocational (PRE) to the post-translocational (POST) state as the newly formed A-site-bound peptidyl-tRNA and P-site-bound deacylated tRNA move to the P and E sites, respectively. Catalyzes the coordinated movement of the two tRNA molecules, the mRNA and conformational changes in the ribosome. This is Elongation factor G from Bacillus cereus (strain ATCC 14579 / DSM 31 / CCUG 7414 / JCM 2152 / NBRC 15305 / NCIMB 9373 / NCTC 2599 / NRRL B-3711).